A 477-amino-acid polypeptide reads, in one-letter code: Pyruvate kinase (477 aa).

Arg-34 contacts substrate. The K(+) site is built by Asn-36, Asp-64, and Thr-65. ATP is bound at residue 36–39 (NTAH). 2 residues coordinate ATP: Arg-71 and Lys-150. Glu-216 contributes to the Mg(2+) binding site. Substrate-binding residues include Gly-239, Asp-240, and Thr-272. Asp-240 is a Mg(2+) binding site.

Belongs to the pyruvate kinase family. As to quaternary structure, homotetramer. The cofactor is Mg(2+). K(+) serves as cofactor.

The enzyme catalyses pyruvate + ATP = phosphoenolpyruvate + ADP + H(+). Its pathway is carbohydrate degradation; glycolysis; pyruvate from D-glyceraldehyde 3-phosphate: step 5/5. This chain is Pyruvate kinase (pyk), found in Borreliella burgdorferi (strain ATCC 35210 / DSM 4680 / CIP 102532 / B31) (Borrelia burgdorferi).